The primary structure comprises 216 residues: Large ribosomal subunit protein uL1 (216 aa).

It belongs to the universal ribosomal protein uL1 family.

This is Large ribosomal subunit protein uL1 from Caenorhabditis elegans.